A 267-amino-acid chain; its full sequence is 4,5-DOPA dioxygenase extradiol (267 aa).

4 residues coordinate Zn(2+): His9, His47, His168, and His222.

The protein belongs to the DODA-type extradiol aromatic ring-opening dioxygenase family. Requires Zn(2+) as cofactor. It depends on Fe(2+) as a cofactor. In terms of tissue distribution, expressed in petals. Not detected in leaves, stems and roots.

It is found in the cytoplasm. The catalysed reaction is L-dopa + O2 = 4-(L-alanin-3-yl)-2-hydroxy-cis,cis-muconate 6-semialdehyde + H(+). The protein operates within pigment biosynthesis; betalain biosynthesis. Functionally, opens the cyclic ring of dihydroxy-phenylalanine (DOPA) between carbons 4 and 5, thus producing an unstable seco-DOPA that rearranges nonenzymatically to betalamic acid. Produces mainly (S)-betalamic acid. Required for the coloration of flowers. This chain is 4,5-DOPA dioxygenase extradiol (DOD), found in Mirabilis jalapa (Garden four-o'clock).